Consider the following 694-residue polypeptide: ATP-dependent RNA helicase DHX33 (694 aa).

The Helicase ATP-binding domain maps to 78–246; that stretch reads LKELEANDTV…FNCKGMYLEG (169 aa). 91–98 serves as a coordination point for ATP; it reads SETGSGKT. A DEAH box motif is present at residues 188–191; sequence DEAH. In terms of domain architecture, Helicase C-terminal spans 270–443; that stretch reads TLFHIHRTTP…SMVLQLLALD (174 aa).

It belongs to the DEAD box helicase family. DEAH subfamily.

It localises to the nucleus. It is found in the nucleolus. It catalyses the reaction ATP + H2O = ADP + phosphate + H(+). Functionally, part of a translational control module, also containing pths/DDX47 and ais/DDX52, which coordinates germline stem cell differentiation with ribosome biogenesis during oogenesis. This module allows for coregulation of ribosomal proteins and non1/GTPBP4, a p53 repressor, preventing p53 stabilization, cell cycle arrest and loss of stem cell differentiation. In Drosophila melanogaster (Fruit fly), this protein is ATP-dependent RNA helicase DHX33.